Consider the following 1467-residue polypeptide: Neuropathy target esterase sws (1467 aa).

The Lumenal segment spans residues 1 to 34 (MDVLEMLRASASGSYNTIFSDAWCQYVSKQITAT). Residues 35–55 (MYMYCAFGLMGVLFLAWFMYF) form a helical membrane-spanning segment. Residues 56-1467 (KRLARLRLRD…RSSTYNETKN (1412 aa)) are Cytoplasmic-facing. Residue 174–301 (IFGHFEKPIF…IRVIQVIMIR (128 aa)) participates in a nucleoside 3',5'-cyclic phosphate binding. Disordered regions lie at residues 332–353 (TMSG…ANGP) and 372–416 (MGMG…SVHG). Residues 339–350 (SQTSQSSRQATA) are compositionally biased toward low complexity. Phosphoserine is present on residues Ser450 and Ser459. A nucleoside 3',5'-cyclic phosphate-binding positions include 488–615 (ELGL…VVRR) and 604–731 (IVLD…LSHR). The region spanning 958–1124 (LVLGGGGARG…VNNLPGHLWR (167 aa)) is the PNPLA domain. A GXGXXG motif is present at residues 962-967 (GGGARG). A GXSXG motif is present at residues 989 to 993 (GVSIG). Ser991 (nucleophile) is an active-site residue. Asp1111 functions as the Proton acceptor in the catalytic mechanism. Positions 1111–1113 (DGG) match the DGA/G motif. Residue Ser1205 is modified to Phosphoserine. Residues 1377–1467 (RKMDKSTQST…RSSTYNETKN (91 aa)) are disordered. Over residues 1382–1393 (STQSTPPTSSRA) the composition is skewed to polar residues. Basic and acidic residues-rich tracts occupy residues 1396-1406 (RGKEEARHMDN) and 1448-1458 (LADKDEDKENR).

This sequence belongs to the NTE family. Interacts with Pka-C3; interaction inhibits the catalytic function of Pka-C3 and the esterase activity of sws.

It localises to the endoplasmic reticulum membrane. It catalyses the reaction a 1-acyl-sn-glycero-3-phosphocholine + H2O = sn-glycerol 3-phosphocholine + a fatty acid + H(+). Functionally, phospholipase B that deacylates intracellular phosphatidylcholine (PtdCho), generating glycerophosphocholine (GroPtdCho). This deacylation occurs at both sn-2 and sn-1 positions of PtdCho. Its specific chemical modification by certain organophosphorus (OP) compounds leads to distal axonopathy. Plays a role in the signaling mechanism between neurons and glia that regulates glia wrapping during development of the adult brain. Essential for membrane lipid homeostasis and cell survival in both neurons and glia of the adult brain. In Drosophila yakuba (Fruit fly), this protein is Neuropathy target esterase sws.